We begin with the raw amino-acid sequence, 477 residues long: Chaperonin GroEL 2 (477 aa).

Residues 29–32 (TLGP), 86–90 (DGTTT), and Gly416 each bind ATP.

Belongs to the chaperonin (HSP60) family. Forms a cylinder of 14 subunits composed of two heptameric rings stacked back-to-back. Interacts with the co-chaperonin GroES.

The protein resides in the cytoplasm. It catalyses the reaction ATP + H2O + a folded polypeptide = ADP + phosphate + an unfolded polypeptide.. Together with its co-chaperonin GroES, plays an essential role in assisting protein folding. The GroEL-GroES system forms a nano-cage that allows encapsulation of the non-native substrate proteins and provides a physical environment optimized to promote and accelerate protein folding. This is Chaperonin GroEL 2 from Streptomyces lividans.